The following is a 255-amino-acid chain: uncharacterized protein (255 aa).

The next 2 membrane-spanning stretches (helical) occupy residues 99–119 (ISLIYLLTVGMLINVCVITSF) and 146–166 (YIGSAFITPALYFTLTLILFL).

The protein resides in the mitochondrion membrane. This is an uncharacterized protein from Schizosaccharomyces pombe (strain 972 / ATCC 24843) (Fission yeast).